Here is a 299-residue protein sequence, read N- to C-terminus: Single myb histone 1 (299 aa).

The HTH myb-type domain maps to 1-61 (MGAPKQRWTP…KWRNLSVTAG (61 aa)). The segment at residues 28 to 57 (WRTILRDSDFSALLRLRSNVDLKDKWRNLS) is a DNA-binding region (H-T-H motif). The region spanning 124-192 (SVARLDDLIL…KVNQKYRIAP (69 aa)) is the H15 domain. Residues 238–279 (EEAAAFAAKAVAEAEVAIAEAEEAARVAEAAENDAEAAKAFL) adopt a coiled-coil conformation.

This sequence belongs to the histone H1/H5 family. SMH subfamily. As to quaternary structure, forms a homodimer and heterodimers. As to expression, expressed in leaves.

The protein localises to the nucleus. It is found in the chromosome. The protein resides in the nucleolus. It localises to the telomere. Its function is as follows. Binds preferentially double-stranded telomeric repeats 5'-TTTAGGG-3', but can also bind to the single G-rich and C-rich telomeric strand. The chain is Single myb histone 1 (SMH1) from Zea mays (Maize).